A 735-amino-acid polypeptide reads, in one-letter code: Type-3 glutamine synthetase (735 aa).

A GS beta-grasp domain is found at 89–183 (THYCHWFLPL…IPTAFCSWTG (95 aa)). The region spanning 188–621 (QKTPLLRSME…SLYDLVSTLV (434 aa)) is the GS catalytic domain.

Belongs to the glutamine synthetase family. Type 3 subfamily. In terms of assembly, homohexamer.

It carries out the reaction L-glutamate + NH4(+) + ATP = L-glutamine + ADP + phosphate + H(+). The sequence is that of Type-3 glutamine synthetase (glnA3) from Dictyostelium discoideum (Social amoeba).